The primary structure comprises 420 residues: Tol-Pal system protein TolB (420 aa).

An N-terminal signal peptide occupies residues Met-1–Ala-21.

The protein belongs to the TolB family. As to quaternary structure, the Tol-Pal system is composed of five core proteins: the inner membrane proteins TolA, TolQ and TolR, the periplasmic protein TolB and the outer membrane protein Pal. They form a network linking the inner and outer membranes and the peptidoglycan layer.

The protein resides in the periplasm. Functionally, part of the Tol-Pal system, which plays a role in outer membrane invagination during cell division and is important for maintaining outer membrane integrity. This Wolbachia pipientis wMel protein is Tol-Pal system protein TolB.